The sequence spans 201 residues: Peptide deformylase (201 aa).

Fe cation contacts are provided by C121 and H163. E164 is a catalytic residue. H167 provides a ligand contact to Fe cation.

The protein belongs to the polypeptide deformylase family. It depends on Fe(2+) as a cofactor.

The enzyme catalyses N-terminal N-formyl-L-methionyl-[peptide] + H2O = N-terminal L-methionyl-[peptide] + formate. Functionally, removes the formyl group from the N-terminal Met of newly synthesized proteins. Requires at least a dipeptide for an efficient rate of reaction. N-terminal L-methionine is a prerequisite for activity but the enzyme has broad specificity at other positions. The sequence is that of Peptide deformylase from Parasynechococcus marenigrum (strain WH8102).